We begin with the raw amino-acid sequence, 77 residues long: EMBRYO SURROUNDING FACTOR 1-like protein 6 (77 aa).

Residues 1 to 25 form the signal peptide; the sequence is MSPSHFAILFIIVISLVPLHGYANG. 4 disulfide bridges follow: cysteine 38/cysteine 53, cysteine 43/cysteine 72, cysteine 51/cysteine 68, and cysteine 54/cysteine 61.

Belongs to the MEG family.

The polypeptide is EMBRYO SURROUNDING FACTOR 1-like protein 6 (ESFL6) (Arabidopsis thaliana (Mouse-ear cress)).